A 384-amino-acid chain; its full sequence is DNA replication and repair protein RecF (384 aa).

30-37 (GENAQGKT) lines the ATP pocket.

It belongs to the RecF family.

The protein resides in the cytoplasm. In terms of biological role, the RecF protein is involved in DNA metabolism; it is required for DNA replication and normal SOS inducibility. RecF binds preferentially to single-stranded, linear DNA. It also seems to bind ATP. The sequence is that of DNA replication and repair protein RecF from Levilactobacillus brevis (strain ATCC 367 / BCRC 12310 / CIP 105137 / JCM 1170 / LMG 11437 / NCIMB 947 / NCTC 947) (Lactobacillus brevis).